The primary structure comprises 148 residues: 3-dehydroquinate dehydratase (148 aa).

The Proton acceptor role is filled by tyrosine 23. 3 residues coordinate substrate: asparagine 74, histidine 80, and aspartate 87. Histidine 100 (proton donor) is an active-site residue. Residues 101–102 (IS) and arginine 111 each bind substrate.

This sequence belongs to the type-II 3-dehydroquinase family. Homododecamer.

It catalyses the reaction 3-dehydroquinate = 3-dehydroshikimate + H2O. It participates in metabolic intermediate biosynthesis; chorismate biosynthesis; chorismate from D-erythrose 4-phosphate and phosphoenolpyruvate: step 3/7. Catalyzes a trans-dehydration via an enolate intermediate. This Anoxybacillus flavithermus (strain DSM 21510 / WK1) protein is 3-dehydroquinate dehydratase.